The sequence spans 462 residues: Elongation factor 1-alpha 1 (462 aa).

Gly-2 carries the post-translational modification N,N,N-trimethylglycine. One can recognise a tr-type G domain in the interval 5-242 (KTHINIVVIG…DCILPPTRPT (238 aa)). The segment at 14 to 21 (GHVDSGKS) is G1. 14 to 21 (GHVDSGKS) contacts GTP. The tract at residues 70-74 (GITID) is G2. The segment at 91 to 94 (DAPG) is G3. GTP contacts are provided by residues 153 to 156 (NKMD) and 194 to 196 (SGW). The G4 stretch occupies residues 153–156 (NKMD). The segment at 194 to 196 (SGW) is G5. 2 positions are modified to 5-glutamyl glycerylphosphorylethanolamine: Glu-301 and Glu-374.

Belongs to the TRAFAC class translation factor GTPase superfamily. Classic translation factor GTPase family. EF-Tu/EF-1A subfamily.

Its subcellular location is the cytoplasm. The catalysed reaction is GTP + H2O = GDP + phosphate + H(+). In terms of biological role, translation elongation factor that catalyzes the GTP-dependent binding of aminoacyl-tRNA (aa-tRNA) to the A-site of ribosomes during the elongation phase of protein synthesis. Base pairing between the mRNA codon and the aa-tRNA anticodon promotes GTP hydrolysis, releasing the aa-tRNA from EEF1A1 and allowing its accommodation into the ribosome. The growing protein chain is subsequently transferred from the P-site peptidyl tRNA to the A-site aa-tRNA, extending it by one amino acid through ribosome-catalyzed peptide bond formation. This is Elongation factor 1-alpha 1 (EEF1A) from Gallus gallus (Chicken).